The sequence spans 153 residues: Histone H2B.3 (153 aa).

2 stretches are compositionally biased toward basic and acidic residues: residues 1-10 (MAPKKDEKPA) and 20-54 (AKAE…GEKK). The disordered stretch occupies residues 1 to 60 (MAPKKDEKPATAEAGAEAPAKAEAKPKAEKAGKKAKKEPAKKAAKEPKGDGEKKDKKKKK). Lysine 41 and lysine 42 each carry N6-acetyllysine. Lysine 149 is covalently cross-linked (Glycyl lysine isopeptide (Lys-Gly) (interchain with G-Cter in ubiquitin)).

The protein belongs to the histone H2B family. As to quaternary structure, the nucleosome is a histone octamer containing two molecules each of H2A, H2B, H3 and H4 assembled in one H3-H4 heterotetramer and two H2A-H2B heterodimers. The octamer wraps approximately 147 bp of DNA. Post-translationally, the N-terminus is blocked. In terms of processing, can be acetylated to form H2BK33ac and H2BK34ac. Acetylated mainly on the ubiquitinated form. Monoubiquitinated to form H2BK143ub1; which is increased during the light period and may give a specific tag for epigenetic transcriptional activation.

It localises to the nucleus. The protein localises to the chromosome. Functionally, core component of nucleosome. Nucleosomes wrap and compact DNA into chromatin, limiting DNA accessibility to the cellular machineries which require DNA as a template. Histones thereby play a central role in transcription regulation, DNA repair, DNA replication and chromosomal stability. DNA accessibility is regulated via a complex set of post-translational modifications of histones, also called histone code, and nucleosome remodeling. The polypeptide is Histone H2B.3 (Chlamydomonas reinhardtii (Chlamydomonas smithii)).